A 1040-amino-acid polypeptide reads, in one-letter code: Multidrug resistance protein MdtB (1040 aa).

The next 12 membrane-spanning stretches (helical) occupy residues 25–45 (LLMA…PVAA), 347–367 (LMLA…NIPA), 369–389 (IIPG…MVFL), 396–416 (LTLM…IVVI), 440–460 (IGFT…PLLF), 472–492 (FAVT…TLTP), 537–557 (WLTL…WIVI), 863–883 (LGST…VLGV), 888–908 (FIHP…ALLA), 910–930 (IIAG…LIGI), 968–988 (ILMT…STGV), and 998–1018 (IAMV…TPVI).

The protein belongs to the resistance-nodulation-cell division (RND) (TC 2.A.6) family. MdtB subfamily. As to quaternary structure, part of a tripartite efflux system composed of MdtA, MdtB and MdtC. MdtB forms a heteromultimer with MdtC.

The protein resides in the cell inner membrane. The chain is Multidrug resistance protein MdtB from Salmonella dublin (strain CT_02021853).